The primary structure comprises 242 residues: Protein crossbronx (242 aa).

Residues 20–176 (QQEYKILAEY…VQENIKESKA (157 aa)) form the UBC core domain.

Belongs to the ubiquitin-conjugating enzyme family. FTS subfamily.

In Drosophila ananassae (Fruit fly), this protein is Protein crossbronx (cbx).